The sequence spans 956 residues: DNA replication helicase (956 aa).

120–127 (GTAGAGKT) contributes to the ATP binding site. The segment at 658–694 (PINNHVDADSSQGGQSVPVSQRMEHGQEETHDIPCLS) is disordered. Low complexity predominate over residues 667–678 (SSQGGQSVPVSQ). The span at 679 to 694 (RMEHGQEETHDIPCLS) shows a compositional bias: basic and acidic residues.

Belongs to the herpesviridae helicase family. Associates with the primase and the primase-associated factor to form the helicase-primase complex.

The protein resides in the host nucleus. Its function is as follows. Component of the helicase/primase complex. Unwinds the DNA at the replication forks and generates single-stranded DNA for both leading and lagging strand synthesis. The primase synthesizes short RNA primers on the lagging strand that the polymerase elongates using dNTPs. Possesses helicase-like motifs and therefore may act as the helicase subunit of the complex. This Human cytomegalovirus (strain AD169) (HHV-5) protein is DNA replication helicase.